Reading from the N-terminus, the 207-residue chain is Suppressor of IKBKE 1 (207 aa).

Coiled coils occupy residues 70 to 102 (HILLSQENTQIRDLQQENRELWVSLEEHQDALE) and 164 to 192 (CKVQERLAQLELENKELRELLSISSESLQ).

Belongs to the SIKE family. Interacts with IKBKE and TBK1 via its coiled coil region. Interaction with TBK1 is disrupted upon viral infection or TLR3 stimulation. Interacts with CDC42BPB. Interacts with SIKE1 which mediates association with the STRIPAK core complex composed of PP2A catalytic and scaffolding subunits, the striatins (PP2A regulatory subunits), the striatin-associated proteins MOB4, STRIP1 and STRIP2, PDCD10 and members of the STE20 kinases, such as STK24 and STK26.

The protein resides in the cytoplasm. In terms of biological role, physiological suppressor of IKK-epsilon and TBK1 that plays an inhibitory role in virus- and TLR3-triggered IRF3. Inhibits TLR3-mediated activation of interferon-stimulated response elements (ISRE) and the IFN-beta promoter. May act by disrupting the interactions of IKBKE or TBK1 with TICAM1/TRIF, IRF3 and RIGI. Does not inhibit NF-kappa-B activation pathways. Associates with the striatin-interacting phosphatase and kinase (STRIPAK) core complex, forming the extended (SIKE1:SLMAP)STRIPAK complex. The (SIKE1:SLMAP)STRIPAK complex dephosphorylates STK3 leading to the inhibition of Hippo signaling and the control of cell growth. The polypeptide is Suppressor of IKBKE 1 (Sike1) (Mus musculus (Mouse)).